The primary structure comprises 438 residues: Adenylyltransferase and sulfurtransferase MOCS3 (438 aa).

Residues Gly80, Asp101, 108–112, Lys125, and 169–170 contribute to the ATP site; these read TNLHR and DN. Zn(2+) contacts are provided by Cys210 and Cys213. Residue Cys227 is the Glycyl thioester intermediate; for adenylyltransferase activity of the active site. 2 residues coordinate Zn(2+): Cys285 and Cys288. Residues 335–436 enclose the Rhodanese domain; that stretch reads SKQRHVLVDV…WTRNVDKEFP (102 aa). The active-site Cysteine persulfide intermediate; for sulfurtransferase activity is the Cys392.

The protein in the N-terminal section; belongs to the HesA/MoeB/ThiF family. UBA4 subfamily. Requires Zn(2+) as cofactor.

The protein localises to the cytoplasm. The protein resides in the cytosol. The catalysed reaction is [molybdopterin-synthase sulfur-carrier protein]-C-terminal Gly-Gly + ATP + H(+) = [molybdopterin-synthase sulfur-carrier protein]-C-terminal Gly-Gly-AMP + diphosphate. It carries out the reaction [molybdopterin-synthase sulfur-carrier protein]-C-terminal Gly-Gly-AMP + S-sulfanyl-L-cysteinyl-[cysteine desulfurase] + AH2 = [molybdopterin-synthase sulfur-carrier protein]-C-terminal-Gly-aminoethanethioate + L-cysteinyl-[cysteine desulfurase] + A + AMP + 2 H(+). The protein operates within tRNA modification; 5-methoxycarbonylmethyl-2-thiouridine-tRNA biosynthesis. It participates in cofactor biosynthesis; molybdopterin biosynthesis. Functionally, plays a central role in 2-thiolation of mcm(5)S(2)U at tRNA wobble positions of cytosolic tRNA(Lys), tRNA(Glu) and tRNA(Gln). Also essential during biosynthesis of the molybdenum cofactor. Acts by mediating the C-terminal thiocarboxylation of sulfur carriers URM1 and MOCS2A. Its N-terminus first activates URM1 and MOCS2A as acyl-adenylates (-COAMP), then the persulfide sulfur on the catalytic cysteine is transferred to URM1 and MOCS2A to form thiocarboxylation (-COSH) of their C-terminus. The reaction probably involves hydrogen sulfide that is generated from the persulfide intermediate and that acts as a nucleophile towards URM1 and MOCS2A. Subsequently, a transient disulfide bond is formed. Does not use thiosulfate as sulfur donor; NFS1 probably acting as a sulfur donor for thiocarboxylation reactions. This is Adenylyltransferase and sulfurtransferase MOCS3 from Culex quinquefasciatus (Southern house mosquito).